A 685-amino-acid polypeptide reads, in one-letter code: Protein arginine N-methyltransferase 7 (685 aa).

2 consecutive SAM-dependent MTase PRMT-type domains span residues 14–355 (QATW…YSLW) and 364–685 (AESI…LKSI).

It belongs to the class I-like SAM-binding methyltransferase superfamily. Protein arginine N-methyltransferase family. PRMT7 subfamily.

In terms of biological role, essential arginine methyltransferase that can both catalyze the formation of omega-N monomethylarginine (MMA) and symmetrical dimethylarginine (sDMA). Specifically mediates the symmetrical dimethylation of arginine residues in the small nuclear ribonucleoproteins SmD1 and SmD3. In Drosophila willistoni (Fruit fly), this protein is Protein arginine N-methyltransferase 7 (Art7).